The primary structure comprises 573 residues: Sulfate adenylyltransferase (573 aa).

The N-terminal stretch occupies residues 1-169 (MANSPHGGVL…IEAVNKLNHY (169 aa)). The interval 170 to 394 (DYVALRYTPA…LRESSPPRHT (225 aa)) is catalytic. Gln-197 is a binding site for sulfate. ATP is bound by residues 197 to 200 (QTRN) and 291 to 294 (GRDH). Catalysis depends on residues Thr-198, Arg-199, and Asn-200. Arg-199 is a sulfate binding site. Ala-295 is a binding site for sulfate. An ATP-binding site is contributed by Val-333. The tract at residues 395–573 (QGFTVFLTGY…LETEGFFDRA (179 aa)) is allosteric regulation domain; adenylyl-sulfate kinase-like. 3'-phosphoadenylyl sulfate-binding positions include 434 to 437 (DTVR), Arg-451, 477 to 478 (IA), and Arg-515.

The protein in the N-terminal section; belongs to the sulfate adenylyltransferase family. This sequence in the C-terminal section; belongs to the APS kinase family. Homohexamer. Dimer of trimers.

Its subcellular location is the cytoplasm. It carries out the reaction sulfate + ATP + H(+) = adenosine 5'-phosphosulfate + diphosphate. The protein operates within sulfur metabolism; hydrogen sulfide biosynthesis; sulfite from sulfate: step 1/3. Allosterically inhibited by 3'-phosphoadenosine 5'-phosphosulfate (PAPS). Functionally, catalyzes the first intracellular reaction of sulfate assimilation, forming adenosine-5'-phosphosulfate (APS) from inorganic sulfate and ATP. Plays an important role in sulfate activation as a component of the biosynthesis pathway of sulfur-containing amino acids. In Aspergillus oryzae (strain ATCC 42149 / RIB 40) (Yellow koji mold), this protein is Sulfate adenylyltransferase.